We begin with the raw amino-acid sequence, 583 residues long: Immunity-related GTPase family Q protein (583 aa).

An intrachain disulfide couples Cys-152 to Cys-158. The stretch at 155 to 179 (SDRCEELERLQVVLRTQAEALQRLL) forms a coiled coil. Residues 186-189 (FEVL) carry the LIR 1 motif. Phosphothreonine is present on Thr-203. The 187-residue stretch at 223-409 (ARLDLAVAGT…PGLGTWLQHA (187 aa)) folds into the IRG-type G domain. A disordered region spans residues 322–373 (APLVGVRTDGQGEDPPEVLEEEKAQNASDGNSGDARSEGKKAGIGDSGCTAA). Residues 332–341 (QGEDPPEVLE) are compositionally biased toward acidic residues. An LIR 2 motif is present at residues 381–384 (WEVL).

Belongs to the TRAFAC class dynamin-like GTPase superfamily. IRG family. In terms of assembly, interacts (via LIR motif 1) with GABARAPL2. Interacts (via LIR motif 2) with MAP1LC3B/LC3B.

The protein resides in the lysosome. Its subcellular location is the cytoplasmic vesicle. It localises to the autophagosome. Autophagy receptor that specifically promotes clearance of misfolded MHC class I molecules by targeting them to the lysosome for degradation. Acts as a molecular adapter that specifically recognizes and binds (1) misfolded MHC class I molecules following their ubiquitination, as well as (2) autophagy-related proteins, promoting the recruitment of misfolded MHC class I molecules to autophagy machinery for degradation. Degradation of misfolded MHC class I molecules is essential to prevent accumulation of defective MHC class I complexes at the surface of CD8(+) T-cells and prevent a stronger T-cell-mediated response. In contrast to other members of the family, does not show GTPase activity. This chain is Immunity-related GTPase family Q protein (Irgq), found in Mus musculus (Mouse).